The following is a 2039-amino-acid chain: PHD finger protein 3 (2039 aa).

Ser97 and Ser125 each carry phosphoserine. A compositionally biased stretch (polar residues) spans 144–168; sequence STIAKRSNAAPLSNTKKASGKTVST. A disordered region spans residues 144–178; sequence STIAKRSNAAPLSNTKKASGKTVSTAKAGVKQPER. Phosphoserine is present on residues Ser283 and Ser299. Residues 460-472 are compositionally biased toward basic and acidic residues; it reads ESHETANLQDDRN. Disordered stretches follow at residues 460-492, 528-555, and 596-685; these read ESHE…KHTK, VKRN…IDKE, and LSDK…SLDE. Positions 473–483 are enriched in low complexity; the sequence is SQSSSVSYLES. Basic and acidic residues predominate over residues 596 to 612; the sequence is LSDKSHAHPGCLKEPHH. Residues 617 to 640 are compositionally biased toward polar residues; it reads GHVSHSSQKQCHKPQQQAPAMKTN. The segment covering 642-670 has biased composition (basic and acidic residues); sequence HVKEELEHPGVEHFKEEDKLKLKKPEKNL. A Glycyl lysine isopeptide (Lys-Gly) (interchain with G-Cter in SUMO2) cross-link involves residue Lys644. Residue Ser680 is modified to Phosphoserine. A PHD-type zinc finger spans residues 717–772; the sequence is SKQCGFCKKPHGNRFMVGCGRCDDWFHGDCVGLSLSQAQQMGEEDKEYVCVKCCAE. The interval 860–904 is disordered; the sequence is GQPVLPRRSSEEKSEKIPKESTTVTCTGEKASKPGTHEKQEMKKK. 2 stretches are compositionally biased toward basic and acidic residues: residues 867–878 and 889–900; these read RSSEEKSEKIPK and KASKPGTHEKQE. The TFIIS central domain maps to 927–1046; the sequence is IRQSVRHSLK…MIEKEQREVE (120 aa). Lys964 participates in a covalent cross-link: Glycyl lysine isopeptide (Lys-Gly) (interchain with G-Cter in SUMO2). Ser1014 carries the post-translational modification Phosphoserine. A disordered region spans residues 1078–1109; that stretch reads EPAANKSLEKPEGSEKQKEEVDSMSKDTTSQH. Basic and acidic residues predominate over residues 1084-1102; that stretch reads SLEKPEGSEKQKEEVDSMS. Phosphoserine occurs at positions 1133, 1148, and 1178. Disordered stretches follow at residues 1171 to 1191, 1360 to 1380, and 1581 to 1623; these read FEEE…RPEM, STSH…PPDK, and KQEE…VGKG. Residues 1581-1598 show a composition bias toward basic and acidic residues; it reads KQEETVESKEKTLKRQLQ. Ser1614 and Ser1642 each carry phosphoserine. Disordered regions lie at residues 1643 to 1684 and 1776 to 1800; these read PQFI…LPGL and PSKS…PMRP. Over residues 1666–1684 the composition is skewed to basic and acidic residues; sequence ESKDGDSCRNGEKHMLPGL. Residues 1781–1797 are compositionally biased toward low complexity; that stretch reads TFTSRSTSPRTSTNFSP. 2 positions are modified to asymmetric dimethylarginine: Arg1867 and Arg1877. Residues 1884–2039 are disordered; it reads FYQVKDIRRP…DHTDRTKSKR (156 aa). Composition is skewed to basic and acidic residues over residues 1888–1902 and 1912–2039; these read KDIR…DPWG and PFNR…KSKR. Phosphoserine is present on residues Ser1898 and Ser1925. Residue Lys1931 forms a Glycyl lysine isopeptide (Lys-Gly) (interchain with G-Cter in SUMO2) linkage.

As to expression, ubiquitous. Expression is significantly reduced or lost in glioblastomas, glioblastoma cell lines, anaplastic astrocytomas, and astrocytomas.

This is PHD finger protein 3 (PHF3) from Homo sapiens (Human).